A 198-amino-acid chain; its full sequence is (S)-2-hydroxypropylphosphonic acid epoxidase (198 aa).

In terms of domain architecture, HTH cro/C1-type spans 15 to 70 (LKDRREQVKMDHAALASLLGETPETVAAWENGEGGELTLTQLGRIAHVLGTSIGAL). Lys23 provides a ligand contact to substrate. Positions 26 to 45 (HAALASLLGETPETVAAWEN) form a DNA-binding region, H-T-H motif. Substrate is bound by residues Arg97, Tyr105, 135–138 (NSGH), and Glu142. One can recognise a Cupin type-2 domain in the interval 136 to 196 (SGHAGNEFLF…GTGSAKLIAV (61 aa)). Residues His138, Glu142, and His180 each contribute to the Fe cation site.

The protein belongs to the non-heme iron-dependent dioxygenase family. Homotetramer. Fe(2+) is required as a cofactor.

The enzyme catalyses (S)-2-hydroxypropylphosphonate + H2O2 = (1R,2S)-epoxypropylphosphonate + 2 H2O. Its pathway is antibiotic biosynthesis; fosfomycin biosynthesis. In terms of biological role, non-heme-dependent dioxygenase that catalyzes the oxidative epoxidation of (S)-2-hydroxypropylphosphonate into (1R,2S)-epoxypropylphosphonate, the final step in the biosynthesis of fosfomycin antibiotic. The protein is (S)-2-hydroxypropylphosphonic acid epoxidase (hppE) of Streptomyces wedmorensis.